Here is a 64-residue protein sequence, read N- to C-terminus: Prokaryotic ubiquitin-like protein Pup (64 aa).

The disordered stretch occupies residues 1–37 (MAQEQTKRGGGGGDDEDVTGTTAAGQERREKLAQDTD). Residues 21 to 58 (TTAAGQERREKLAQDTDDLLDEIDDVLEENAEDFVRAY) are ARC ATPase binding. Residues 25–52 (GQERREKLAQDTDDLLDEIDDVLEENAE) adopt a coiled-coil conformation. Glutamine 64 is modified (deamidated glutamine). Residue glutamine 64 forms an Isoglutamyl lysine isopeptide (Gln-Lys) (interchain with K-? in acceptor proteins) linkage.

It belongs to the prokaryotic ubiquitin-like protein family. As to quaternary structure, strongly interacts with the proteasome-associated ATPase ARC through a hydrophobic interface; the interacting region of Pup lies in its C-terminal half. There is one Pup binding site per ARC hexamer ring. In terms of processing, is modified by deamidation of its C-terminal glutamine to glutamate by the deamidase Dop, a prerequisite to the subsequent pupylation process.

It participates in protein degradation; proteasomal Pup-dependent pathway. In terms of biological role, protein modifier that is covalently attached to lysine residues of substrate proteins, thereby targeting them for proteasomal degradation. The tagging system is termed pupylation. The chain is Prokaryotic ubiquitin-like protein Pup from Mycobacterium marinum (strain ATCC BAA-535 / M).